Reading from the N-terminus, the 297-residue chain is Bifunctional protein FolD (297 aa).

Residues 164–166, serine 193, and valine 234 each bind NADP(+); that span reads GRS.

Belongs to the tetrahydrofolate dehydrogenase/cyclohydrolase family. In terms of assembly, homodimer.

The enzyme catalyses (6R)-5,10-methylene-5,6,7,8-tetrahydrofolate + NADP(+) = (6R)-5,10-methenyltetrahydrofolate + NADPH. The catalysed reaction is (6R)-5,10-methenyltetrahydrofolate + H2O = (6R)-10-formyltetrahydrofolate + H(+). It functions in the pathway one-carbon metabolism; tetrahydrofolate interconversion. Its function is as follows. Catalyzes the oxidation of 5,10-methylenetetrahydrofolate to 5,10-methenyltetrahydrofolate and then the hydrolysis of 5,10-methenyltetrahydrofolate to 10-formyltetrahydrofolate. The polypeptide is Bifunctional protein FolD (Natronomonas pharaonis (strain ATCC 35678 / DSM 2160 / CIP 103997 / JCM 8858 / NBRC 14720 / NCIMB 2260 / Gabara) (Halobacterium pharaonis)).